Consider the following 288-residue polypeptide: Bis(5'-nucleosyl)-tetraphosphatase, symmetrical (288 aa).

This sequence belongs to the Ap4A hydrolase family.

The catalysed reaction is P(1),P(4)-bis(5'-adenosyl) tetraphosphate + H2O = 2 ADP + 2 H(+). Hydrolyzes diadenosine 5',5'''-P1,P4-tetraphosphate to yield ADP. This chain is Bis(5'-nucleosyl)-tetraphosphatase, symmetrical, found in Baumannia cicadellinicola subsp. Homalodisca coagulata.